Consider the following 176-residue polypeptide: RNA pyrophosphohydrolase (176 aa).

One can recognise a Nudix hydrolase domain in the interval 6–149 (GYRPNVGIII…KRNVYEMALT (144 aa)). Positions 38–59 (GGIKPGESPEAAMYRELMEEVG) match the Nudix box motif.

This sequence belongs to the Nudix hydrolase family. RppH subfamily. A divalent metal cation serves as cofactor.

Functionally, accelerates the degradation of transcripts by removing pyrophosphate from the 5'-end of triphosphorylated RNA, leading to a more labile monophosphorylated state that can stimulate subsequent ribonuclease cleavage. The polypeptide is RNA pyrophosphohydrolase (Laribacter hongkongensis (strain HLHK9)).